Reading from the N-terminus, the 557-residue chain is Formate--tetrahydrofolate ligase (557 aa).

Thr67–Thr74 is an ATP binding site.

The protein belongs to the formate--tetrahydrofolate ligase family.

The catalysed reaction is (6S)-5,6,7,8-tetrahydrofolate + formate + ATP = (6R)-10-formyltetrahydrofolate + ADP + phosphate. Its pathway is one-carbon metabolism; tetrahydrofolate interconversion. This Cereibacter sphaeroides (strain KD131 / KCTC 12085) (Rhodobacter sphaeroides) protein is Formate--tetrahydrofolate ligase.